The following is a 275-amino-acid chain: T-cell ecto-ADP-ribosyltransferase 1 (275 aa).

The N-terminal stretch at 1 to 20 is a signal peptide; it reads MPSNICKFFLTWWLIQQVTG. 2 disulfide bridges follow: Cys41/Cys243 and Cys141/Cys193. The N-linked (GlcNAc...) asparagine glycan is linked to Asn58. Residues 61-238 enclose the TR mART core domain; sequence EKLKVAWEEA…IFLDSPKRKK (178 aa). NAD(+) contacts are provided by Tyr98, Arg146, and Gln164. Residue Arg146 is part of the active site. The active site involves Ser167. An NAD(+)-binding site is contributed by Ser202. Glu209 is a catalytic residue. The GPI-anchor amidated serine moiety is linked to residue Ser246. Positions 247 to 275 are cleaved as a propeptide — removed in mature form; that stretch reads SAGTRESCVSLFLVVLTSLLVQLLCLAEP.

It belongs to the Arg-specific ADP-ribosyltransferase family. As to expression, postthymic T-cells.

It localises to the cell membrane. The enzyme catalyses L-arginyl-[protein] + NAD(+) = N(omega)-(ADP-D-ribosyl)-L-arginyl-[protein] + nicotinamide + H(+). The catalysed reaction is NAD(+) + H2O = ADP-D-ribose + nicotinamide + H(+). Has NAD(+) glycohydrolase activity and extremely low ADP-ribosyltransferase activity. This chain is T-cell ecto-ADP-ribosyltransferase 1 (Art2a), found in Rattus norvegicus (Rat).